The following is a 241-amino-acid chain: Uridylate kinase (241 aa).

Residue 14–17 (KASG) coordinates ATP. Positions 22–27 (GDQGFG) are involved in allosteric activation by GTP. G56 provides a ligand contact to UMP. Positions 57 and 61 each coordinate ATP. Residues D76 and 137-144 (TGNPFFTT) contribute to the UMP site. ATP contacts are provided by T164, Q165, Y170, and D173.

Belongs to the UMP kinase family. As to quaternary structure, homohexamer.

The protein resides in the cytoplasm. The enzyme catalyses UMP + ATP = UDP + ADP. It participates in pyrimidine metabolism; CTP biosynthesis via de novo pathway; UDP from UMP (UMPK route): step 1/1. Its activity is regulated as follows. Allosterically activated by GTP. Inhibited by UTP. Its function is as follows. Catalyzes the reversible phosphorylation of UMP to UDP. This Agrobacterium fabrum (strain C58 / ATCC 33970) (Agrobacterium tumefaciens (strain C58)) protein is Uridylate kinase.